Consider the following 180-residue polypeptide: NADH-quinone oxidoreductase subunit I (180 aa).

4Fe-4S ferredoxin-type domains are found at residues 48-80 and 90-119; these read IVLT…LQKA and EFFR…LTPD. Residues Cys-60, Cys-63, Cys-66, Cys-70, Cys-99, Cys-102, Cys-105, and Cys-109 each coordinate [4Fe-4S] cluster.

The protein belongs to the complex I 23 kDa subunit family. As to quaternary structure, NDH-1 is composed of 13 different subunits. Subunits NuoA, H, J, K, L, M, N constitute the membrane sector of the complex. Requires [4Fe-4S] cluster as cofactor.

It is found in the cell inner membrane. The enzyme catalyses a quinone + NADH + 5 H(+)(in) = a quinol + NAD(+) + 4 H(+)(out). NDH-1 shuttles electrons from NADH, via FMN and iron-sulfur (Fe-S) centers, to quinones in the respiratory chain. The immediate electron acceptor for the enzyme in this species is believed to be ubiquinone. Couples the redox reaction to proton translocation (for every two electrons transferred, four hydrogen ions are translocated across the cytoplasmic membrane), and thus conserves the redox energy in a proton gradient. The sequence is that of NADH-quinone oxidoreductase subunit I from Sodalis glossinidius (strain morsitans).